The sequence spans 534 residues: High-affinity nicotinic acid transporter (534 aa).

At 1 to 130 (MSNKFTMESP…DIHLVGTQYN (130 aa)) the chain is on the extracellular side. The disordered stretch occupies residues 21–56 (SPTNDGSEEKPTEVTFQEDEGHDASLHNRSHDKKSE). Serine 27 is subject to Phosphoserine. The chain crosses the membrane as a helical span at residues 131 to 151 (TCVTVFFATYVLFDPIGTNLL). A topological domain (cytoplasmic) is located at residue lysine 152. Residues 153-173 (IMGPPLMMSICLTCFGAISLG) traverse the membrane as a helical segment. The Extracellular portion of the chain corresponds to 174 to 187 (TAWVKNYAQLIVVR). A helical membrane pass occupies residues 188-208 (LLLGAFEGMIYPAINMYLSVC). Over 209–217 (YRREQYALR) the chain is Cytoplasmic. Residues 218-238 (FAFVFSAACLSSSFGGLIAYG) traverse the membrane as a helical segment. At 239–250 (CSKISGSLKDWQ) the chain is on the extracellular side. A helical membrane pass occupies residues 251-271 (YIYIVEGCISLGFVPFYAFGL). Residues 272-323 (SKNLEDSWFFNKEEKEYISERYKTMNTFDPDEKFEWFQVWQAVKDVKTWASA) lie on the Cytoplasmic side of the membrane. Lysine 283 participates in a covalent cross-link: Glycyl lysine isopeptide (Lys-Gly) (interchain with G-Cter in ubiquitin). A helical transmembrane segment spans residues 324–344 (VALFGIDLTTFGLTVFLPIII). At 345 to 355 (TSMGFTNVRAQ) the chain is on the extracellular side. Residues 356 to 376 (LMTVPIYFLTAIVFFICAVWS) form a helical membrane-spanning segment. At 377–384 (DRIKLRSP) the chain is on the cytoplasmic side. A helical transmembrane segment spans residues 385–405 (FILGACLTTSIGIAIVLGSQV). Residues 406-410 (HGVRY) are Extracellular-facing. The chain crosses the membrane as a helical span at residues 411-431 (FGVYILCMGIYVNAACNCLWL). The Cytoplasmic portion of the chain corresponds to 432-444 (SGNTGNYFKRATA). A helical membrane pass occupies residues 445-465 (LGINLFFGSGSGLVSGQIFVA). The Extracellular segment spans residues 466–474 (KDKPRYIKG). A helical membrane pass occupies residues 475–495 (LSISLAFQVFSIFMTVVQIFL). Over 496–534 (YKRENDKKKAIIDRCNELGEPIPYDERLSDKNPEFKYMY) the chain is Cytoplasmic.

This sequence belongs to the major facilitator superfamily. Allantoate permease family.

The protein resides in the membrane. Functionally, involved in the uptake of nicotinic acid. In Saccharomyces cerevisiae (strain ATCC 204508 / S288c) (Baker's yeast), this protein is High-affinity nicotinic acid transporter (TNA1).